We begin with the raw amino-acid sequence, 223 residues long: MTSNQLAQYIDHTALTAEKNEQDISTLCNEAIEHGFYSVCINSGYIPLAKEKLAGSNVKICTVVGFPLGANLTSVKAFETQEAIKAGANEIDMVINVGWIKSQKWDAVKQDIQAVFNACNGTPLKVILETCLLTKDEIVKACEICKEIGVAFVKTSTGFNKGGATVEDVALMKQTVGNIGVKASGGVRDTETALAMIKAGATRIGASAGIAIISGTQDTQSTY.

Residue Asp92 is the Proton donor/acceptor of the active site. Residue Lys154 is the Schiff-base intermediate with acetaldehyde of the active site. The active-site Proton donor/acceptor is Lys182.

This sequence belongs to the DeoC/FbaB aldolase family. DeoC type 1 subfamily.

It is found in the cytoplasm. The enzyme catalyses 2-deoxy-D-ribose 5-phosphate = D-glyceraldehyde 3-phosphate + acetaldehyde. Its pathway is carbohydrate degradation; 2-deoxy-D-ribose 1-phosphate degradation; D-glyceraldehyde 3-phosphate and acetaldehyde from 2-deoxy-alpha-D-ribose 1-phosphate: step 2/2. Its function is as follows. Catalyzes a reversible aldol reaction between acetaldehyde and D-glyceraldehyde 3-phosphate to generate 2-deoxy-D-ribose 5-phosphate. The polypeptide is Deoxyribose-phosphate aldolase (Haemophilus influenzae (strain 86-028NP)).